Here is a 472-residue protein sequence, read N- to C-terminus: UDP-glycosyltransferase 708G2 (472 aa).

H23 acts as the Proton acceptor in catalysis. H23 is an an anthocyanidin binding site. Residue D117 is the Charge relay of the active site. T140 is a UDP-alpha-D-glucose binding site. Residues 283-284 (SR) are UDP. V346, Q348, H363, W366, N367, S368, and E371 together coordinate UDP-alpha-D-glucose. Residue G386 participates in an anthocyanidin binding. Positions 387 and 388 each coordinate UDP-alpha-D-glucose.

It belongs to the UDP-glycosyltransferase family. As to expression, expressed at low levels in leaves, flowers and immature leaves.

It carries out the reaction a 3'-hydro-2'-hydroxy-beta-oxodihydrochalcone + UDP-alpha-D-glucose = a 3'-(beta-D-glucopyranosyl)-2'-hydroxy-beta-oxodihydrochalcone + UDP + H(+). In terms of biological role, UDP-glucose-dependent glucosyltransferase catalyzing the C-glucosylation of 2-hydroxyflavanones (2-hydroxylnaringenin and 2-hydroxypinocembrin) and phloretin. No activity with flavanones, flavones or flavonols. Exhibits C-glucosylation activity toward 2-phenyl-2',4',6'-trihydroxyacetophenone. Can use UDP-xylose as sugar donor, but catalytic efficiency is much lower toward UDP-xylose than toward UDP-glucose. The polypeptide is UDP-glycosyltransferase 708G2 (UGT708G2) (Citrus unshiu (Satsuma mandarin)).